Reading from the N-terminus, the 181-residue chain is Peptidyl-prolyl cis-trans isomerase H (181 aa).

The region spanning 17 to 180 (FFDIALGGVP…QDVIITQCGE (164 aa)) is the PPIase cyclophilin-type domain.

This sequence belongs to the cyclophilin-type PPIase family. PPIase H subfamily.

The protein resides in the nucleus. The enzyme catalyses [protein]-peptidylproline (omega=180) = [protein]-peptidylproline (omega=0). Functionally, PPIases accelerate the folding of proteins. It catalyzes the cis-trans isomerization of proline imidic peptide bonds in oligopeptides. The sequence is that of Peptidyl-prolyl cis-trans isomerase H (cyp3) from Aspergillus fumigatus (strain ATCC MYA-4609 / CBS 101355 / FGSC A1100 / Af293) (Neosartorya fumigata).